Consider the following 206-residue polypeptide: MARYLGPKLKLSRREGTDLFLKSGVRAIDSKCKLESAPGQHGARKPRLSEYGLQLREKQKVRRIYGVLEKQFRNYYKEAARLKGNTGENLLQLLETRLDNVVYRMGFGATRAESRQLVSHKSVMVNGRVVNIPSFKVSANDVVSIREKSRTQARIKAALEVAAQREKPTWVEVDSAKMEGAFKRIPERSDLSAEINEQLIVELYSK.

The 61-residue stretch at 96-156 folds into the S4 RNA-binding domain; that stretch reads TRLDNVVYRM…EKSRTQARIK (61 aa).

It belongs to the universal ribosomal protein uS4 family. Part of the 30S ribosomal subunit. Contacts protein S5. The interaction surface between S4 and S5 is involved in control of translational fidelity.

One of the primary rRNA binding proteins, it binds directly to 16S rRNA where it nucleates assembly of the body of the 30S subunit. Functionally, with S5 and S12 plays an important role in translational accuracy. This Shewanella sp. (strain MR-4) protein is Small ribosomal subunit protein uS4.